Consider the following 484-residue polypeptide: Glutamate--tRNA ligase (484 aa).

The 'HIGH' region signature appears at 11 to 21 (PSPTGLLHIGN). The 'KMSKS' region motif lies at 255–259 (KLSKR). K258 contributes to the ATP binding site.

It belongs to the class-I aminoacyl-tRNA synthetase family. Glutamate--tRNA ligase type 1 subfamily. As to quaternary structure, monomer.

The protein resides in the cytoplasm. The catalysed reaction is tRNA(Glu) + L-glutamate + ATP = L-glutamyl-tRNA(Glu) + AMP + diphosphate. In terms of biological role, catalyzes the attachment of glutamate to tRNA(Glu) in a two-step reaction: glutamate is first activated by ATP to form Glu-AMP and then transferred to the acceptor end of tRNA(Glu). The chain is Glutamate--tRNA ligase from Streptococcus agalactiae serotype V (strain ATCC BAA-611 / 2603 V/R).